Consider the following 718-residue polypeptide: Polyribonucleotide nucleotidyltransferase (718 aa).

Mg(2+) contacts are provided by aspartate 497 and aspartate 503. One can recognise a KH domain in the interval 564 to 623; it reads PRLLTLKIEPEHIGMVIGPGGKTIKGITEQTSCKIDIADDGTVTIASSEGERAERARQMI. The region spanning 633-701 is the S1 motif domain; sequence GEVYLGRVTR…SKGRLNLTRL (69 aa).

Belongs to the polyribonucleotide nucleotidyltransferase family. Interacts with RNase E (rne). Mg(2+) serves as cofactor.

The protein resides in the cytoplasm. The catalysed reaction is RNA(n+1) + phosphate = RNA(n) + a ribonucleoside 5'-diphosphate. Its function is as follows. Involved in mRNA degradation. Catalyzes the phosphorolysis of single-stranded polyribonucleotides processively in the 3'- to 5'-direction. This chain is Polyribonucleotide nucleotidyltransferase, found in Synechocystis sp. (strain ATCC 27184 / PCC 6803 / Kazusa).